The primary structure comprises 257 residues: Imidazole glycerol phosphate synthase subunit HisF (257 aa).

Active-site residues include Asp11 and Asp130.

It belongs to the HisA/HisF family. As to quaternary structure, heterodimer of HisH and HisF.

It is found in the cytoplasm. It catalyses the reaction 5-[(5-phospho-1-deoxy-D-ribulos-1-ylimino)methylamino]-1-(5-phospho-beta-D-ribosyl)imidazole-4-carboxamide + L-glutamine = D-erythro-1-(imidazol-4-yl)glycerol 3-phosphate + 5-amino-1-(5-phospho-beta-D-ribosyl)imidazole-4-carboxamide + L-glutamate + H(+). The protein operates within amino-acid biosynthesis; L-histidine biosynthesis; L-histidine from 5-phospho-alpha-D-ribose 1-diphosphate: step 5/9. Functionally, IGPS catalyzes the conversion of PRFAR and glutamine to IGP, AICAR and glutamate. The HisF subunit catalyzes the cyclization activity that produces IGP and AICAR from PRFAR using the ammonia provided by the HisH subunit. This chain is Imidazole glycerol phosphate synthase subunit HisF, found in Mannheimia succiniciproducens (strain KCTC 0769BP / MBEL55E).